A 554-amino-acid chain; its full sequence is Chaperonin GroEL (554 aa).

Residues 30-33, lysine 51, 87-91, glycine 416, and aspartate 503 each bind ATP; these read TLGP and DGTTT.

This sequence belongs to the chaperonin (HSP60) family. Forms a cylinder of 14 subunits composed of two heptameric rings stacked back-to-back. Interacts with the co-chaperonin GroES.

The protein resides in the cytoplasm. It catalyses the reaction ATP + H2O + a folded polypeptide = ADP + phosphate + an unfolded polypeptide.. Functionally, together with its co-chaperonin GroES, plays an essential role in assisting protein folding. The GroEL-GroES system forms a nano-cage that allows encapsulation of the non-native substrate proteins and provides a physical environment optimized to promote and accelerate protein folding. The polypeptide is Chaperonin GroEL (Holospora obtusa).